The chain runs to 91 residues: Potassium channel toxin Meg-beta-KTx1 (91 aa).

An N-terminal signal peptide occupies residues M1–C19. The propeptide occupies G20–Q27. The region spanning Q54 to F91 is the BetaSPN-type CS-alpha/beta domain. 3 cysteine pairs are disulfide-bonded: C57/C78, C64/C83, and C68/C85.

This sequence belongs to the long chain scorpion toxin family. Class 1 subfamily. In terms of tissue distribution, expressed by the venom gland.

It is found in the secreted. Functionally, inhibits voltage-gated potassium channel. The protein is Potassium channel toxin Meg-beta-KTx1 of Mesobuthus gibbosus (Mediterranean checkered scorpion).